The chain runs to 163 residues: Probable ribosome biogenesis protein RLP24 (163 aa).

It belongs to the eukaryotic ribosomal protein eL24 family. In terms of assembly, associated with nucleolar and cytoplasmic pre-60S particles. At the end of biogenesis it dissociates from cytoplasmic pre-60S particles and is likely to be exchanged for its ribosomal homolog, RPL24.

Its subcellular location is the nucleus. The protein localises to the nucleolus. Involved in the biogenesis of the 60S ribosomal subunit. Ensures the docking of GTPBP4/NOG1 to pre-60S particles. This Mus musculus (Mouse) protein is Probable ribosome biogenesis protein RLP24 (Rsl24d1).